Reading from the N-terminus, the 130-residue chain is DNA-directed RNA polymerase subunit omega (130 aa).

The segment at 108-130 (TEEELLKGLEGLAPPEEQPEEDE) is disordered.

Belongs to the RNA polymerase subunit omega family. In terms of assembly, the RNAP catalytic core consists of 2 alpha, 1 beta, 1 beta' and 1 omega subunit. When a sigma factor is associated with the core the holoenzyme is formed, which can initiate transcription.

It catalyses the reaction RNA(n) + a ribonucleoside 5'-triphosphate = RNA(n+1) + diphosphate. In terms of biological role, promotes RNA polymerase assembly. Latches the N- and C-terminal regions of the beta' subunit thereby facilitating its interaction with the beta and alpha subunits. This Rhodopseudomonas palustris (strain ATCC BAA-98 / CGA009) protein is DNA-directed RNA polymerase subunit omega.